We begin with the raw amino-acid sequence, 493 residues long: MCVRLAGNLFKTSDFIQCQKLILAVSGGSDSLALLFLVKDHLKTLSVPPEIIVVTVDHQLRQESAREASIVAEICRAHHIQHRIVRWEGKKPKTHIASSARVARYDLLFQEAQKQGATLIMTGHTLNDQVETYQMRYQRLQKSADVLQQEAFAEMGGGVHADVLQQEAFAERCERMGVGGHGGDIAEKSDGLIYERGLSCIPREALLRGTVRLIRPLLGVKRETLRTYLRLKEKTWIEDPTNEDCNFERVRVRQSLQPKKFTCIARKVHEAALQRRQQAKNIADLILALDITVEYGRCFIAKPALFLQKHPGFPFVVGLFAVLMGGGFYLLPHKKLSTLVQKLSLHSSEKRRFTYAGSVIEYNRSGIAFWREARNIKEAIVEKGQTFLWDGRYQITNHSHEPIKVGAAGLQQLKSLFKNNNFNLENTHFPSLKSLLMISNDKGYDIPELAYHAAMQHTITIRRIMAPFDWLLSSQDAAFVNVVQPFFDIKVKG.

Position 26-31 (26-31) interacts with ATP; the sequence is SGGSDS.

It belongs to the tRNA(Ile)-lysidine synthase family.

Its subcellular location is the cytoplasm. It catalyses the reaction cytidine(34) in tRNA(Ile2) + L-lysine + ATP = lysidine(34) in tRNA(Ile2) + AMP + diphosphate + H(+). Its function is as follows. Ligates lysine onto the cytidine present at position 34 of the AUA codon-specific tRNA(Ile) that contains the anticodon CAU, in an ATP-dependent manner. Cytidine is converted to lysidine, thus changing the amino acid specificity of the tRNA from methionine to isoleucine. The polypeptide is tRNA(Ile)-lysidine synthase (Bartonella henselae (strain ATCC 49882 / DSM 28221 / CCUG 30454 / Houston 1) (Rochalimaea henselae)).